A 606-amino-acid polypeptide reads, in one-letter code: Anthranilate synthase alpha subunit 2, chloroplastic (606 aa).

The N-terminal 49 residues, 1 to 49, are a transit peptide targeting the chloroplast; that stretch reads MESIAAATFTPSRLAARPATPAAAAAPVRARAAVAAGGRRRTSRRGGVR.

This sequence belongs to the anthranilate synthase component I family. Heterotetramer consisting of two non-identical subunits: a beta subunit and a large alpha subunit.

Its subcellular location is the plastid. The protein localises to the chloroplast. The catalysed reaction is chorismate + L-glutamine = anthranilate + pyruvate + L-glutamate + H(+). Its pathway is amino-acid biosynthesis; L-tryptophan biosynthesis; L-tryptophan from chorismate: step 1/5. Its activity is regulated as follows. Feedback inhibition by tryptophan. In terms of biological role, part of a heterotetrameric complex that catalyzes the two-step biosynthesis of anthranilate, an intermediate in the biosynthesis of L-tryptophan. In the first step, the glutamine-binding beta subunit of anthranilate synthase (AS) provides the glutamine amidotransferase activity which generates ammonia as a substrate that, along with chorismate, is used in the second step, catalyzed by the large alpha subunit of AS to produce anthranilate. This chain is Anthranilate synthase alpha subunit 2, chloroplastic, found in Oryza sativa subsp. japonica (Rice).